The chain runs to 379 residues: Cytochrome b (379 aa).

4 helical membrane-spanning segments follow: residues 33-53 (FGSL…FLAM), 77-98 (WLIR…YLHI), 113-133 (WNIG…GYVL), and 178-198 (FFAF…IHFF). Heme b-binding residues include His83 and His97. Positions 182 and 196 each coordinate heme b. Residue His201 participates in a ubiquinone binding. Helical transmembrane passes span 226–246 (IKDI…VLFS), 288–308 (LGGV…PMLH), 320–340 (FSQC…WIGG), and 347–367 (YITI…IVSR).

This sequence belongs to the cytochrome b family. As to quaternary structure, the cytochrome bc1 complex contains 11 subunits: 3 respiratory subunits (MT-CYB, CYC1 and UQCRFS1), 2 core proteins (UQCRC1 and UQCRC2) and 6 low-molecular weight proteins (UQCRH/QCR6, UQCRB/QCR7, UQCRQ/QCR8, UQCR10/QCR9, UQCR11/QCR10 and a cleavage product of UQCRFS1). This cytochrome bc1 complex then forms a dimer. The cofactor is heme b.

The protein localises to the mitochondrion inner membrane. Functionally, component of the ubiquinol-cytochrome c reductase complex (complex III or cytochrome b-c1 complex) that is part of the mitochondrial respiratory chain. The b-c1 complex mediates electron transfer from ubiquinol to cytochrome c. Contributes to the generation of a proton gradient across the mitochondrial membrane that is then used for ATP synthesis. This is Cytochrome b (MT-CYB) from Dolichotis patagonum (Patagonian mara).